The following is a 205-amino-acid chain: Outer-membrane lipoprotein LolB (205 aa).

An N-terminal signal peptide occupies residues 1–17 (MRLRLFLAASALALLSG). C18 carries the N-palmitoyl cysteine lipid modification. C18 is lipidated: S-diacylglycerol cysteine.

Belongs to the LolB family. Monomer.

It localises to the cell outer membrane. Plays a critical role in the incorporation of lipoproteins in the outer membrane after they are released by the LolA protein. This chain is Outer-membrane lipoprotein LolB, found in Pseudomonas aeruginosa (strain LESB58).